The chain runs to 3916 residues: Fusarin C synthetase (3916 aa).

Positions 9–440 (KEPIAIIGTS…GTNVHAIIEQ (432 aa)) constitute a Ketosynthase family 3 (KS3) domain. Catalysis depends on for beta-ketoacyl synthase activity residues C182, H319, and H360. The segment at 548–866 (VFTGQGAQWP…QGTVARNIHD (319 aa)) is malonyl-CoA:ACP transacylase (MAT) domain. Positions 935-1068 (HPLLGARSVE…GQLRVEFGCS (134 aa)) are N-terminal hotdog fold. Residues 935-1228 (HPLLGARSVE…GLTCTSLLRP (294 aa)) are dehydratase (DH) domain. The PKS/mFAS DH domain occupies 935–1231 (HPLLGARSVE…CTSLLRPGPS (297 aa)). H967 (proton acceptor; for dehydratase activity) is an active-site residue. The interval 1084 to 1231 (LTSVNMERFY…CTSLLRPGPS (148 aa)) is C-terminal hotdog fold. Residue D1141 is the Proton donor; for dehydratase activity of the active site. The segment at 1347–1575 (IQAVGENLPS…VNDFVDAEKY (229 aa)) is C-methyltransferase (CMeT) domain. The tract at residues 2092–2266 (TYLLIGCTGG…AASVMHIGMV (175 aa)) is ketoreductase (KR) domain 1. In terms of domain architecture, Carrier 1 spans 2372 to 2449 (EILAVVEEEF…ELCSTVVSHL (78 aa)). Position 2409 is an O-(pantetheine 4'-phosphoryl)serine (S2409). The disordered stretch occupies residues 2487–2510 (NEPFTIRNSPNSTQVTSEAGVDED). The segment covering 2492–2503 (IRNSPNSTQVTS) has biased composition (polar residues). The tract at residues 2522 to 2806 (PLSFAQERLW…VNLLPLRLKI (285 aa)) is condensation. The tract at residues 2975–3385 (EFVVKQPDDT…RIAGDSQIKL (411 aa)) is adenylation. A Carrier 2 domain is found at 3493–3570 (KPLTETQERL…EMAAKIDGST (78 aa)). Position 3530 is an O-(pantetheine 4'-phosphoryl)serine (S3530). The interval 3612–3833 (LTGATGFLGV…DFVPVDVVAA (222 aa)) is thiolester reductase (R) domain.

The protein in the C-terminal section; belongs to the NRP synthetase family.

Its pathway is mycotoxin biosynthesis. In terms of biological role, fusarin C synthetase; part of the gene cluster that mediates the biosynthesis of the mycotoxin fusarin C. Within the cluster, FUS1, FUS2, FUS8 and FUS9 are sufficient for fusarin production. The roles of the other FUS members are yet undetermined. The fusarin C synthetase FUS1 is responsible for the condensation of one acetyl-coenzyme A (CoA) unit with six malonyl-CoA units and the amide linkage of the arising heptaketide and homoserine, subsequently releasing the first intermediate, prefusarin, as an alcohol with an open ring structure. The cytochrome P450 monooxygenase FUS8 participates in multiple oxidation processes at carbon C-20 and is able to use the FUS1 product as substrate, resulting in formation of 20-hydroxy-prefusarin. This reaction seems to be essential before the 2-pyrrolidone ring closure can be catalyzed by FUS2, generating 20-hydroxy-fusarin. FUS8 is able to further oxidizes carbon C-20 after ring closure, resulting in the formation of carboxy-fusarin C. As the last step, FUS9 methylates the hydroxyl group at C-21 to generate fusarin C. Fusarin C can then rearrange to epi-fusarin C, the (z)-isomers, and fusarin A and fusarin D. The polypeptide is Fusarin C synthetase (Gibberella fujikuroi (strain CBS 195.34 / IMI 58289 / NRRL A-6831) (Bakanae and foot rot disease fungus)).